A 151-amino-acid polypeptide reads, in one-letter code: Small ribosomal subunit protein uS9 (151 aa).

It belongs to the universal ribosomal protein uS9 family.

The protein is Small ribosomal subunit protein uS9 (RpS16) of Spodoptera frugiperda (Fall armyworm).